The chain runs to 307 residues: MSFFSHHPSRSPRIWTDILLRWQGSVIPAIASRVLVCMAFSLGVTLVDGWGYKFSIPIQESIVPSIVLGLLLVFRTNTAYERFWEGRKAWGTMVNTIRNLSRIIWVSVAEPSPQAHQDKIKILHLLVAFAVATKLHLRSQPLNEEIWALLPESGYRKLEDLNNPPLEIAFWISNYLQREYDQNNINAYQLTAMLRLVDTMVDVLGSCERILKTPIPLAYAIHLRQLIFLYCFITPFQIVNTLHWATAFVVGIIAFTVFGIEEIGVEIENPFGHDANDLPLDQICQTMQANLEDLIQLPPWHQISHGD.

4 helical membrane passes run 26–46 (VIPA…GVTL), 54–74 (FSIP…LLVF), 226–246 (LIFL…HWAT), and 247–267 (AFVV…GVEI).

The protein belongs to the anion channel-forming bestrophin (TC 1.A.46) family.

The protein localises to the cell membrane. This Synechocystis sp. (strain ATCC 27184 / PCC 6803 / Kazusa) protein is Voltage-dependent anion channel-forming protein sll1024.